Consider the following 118-residue polypeptide: Small ribosomal subunit protein uS13 (118 aa).

Positions 94–118 (SLPLRGQRTKTNARTRKGPRKPIKK) are disordered.

The protein belongs to the universal ribosomal protein uS13 family. In terms of assembly, part of the 30S ribosomal subunit. Forms a loose heterodimer with protein S19. Forms two bridges to the 50S subunit in the 70S ribosome.

In terms of biological role, located at the top of the head of the 30S subunit, it contacts several helices of the 16S rRNA. In the 70S ribosome it contacts the 23S rRNA (bridge B1a) and protein L5 of the 50S subunit (bridge B1b), connecting the 2 subunits; these bridges are implicated in subunit movement. Contacts the tRNAs in the A and P-sites. This Shewanella amazonensis (strain ATCC BAA-1098 / SB2B) protein is Small ribosomal subunit protein uS13.